Consider the following 259-residue polypeptide: MVLTTGLKGAHVLITGGTRGMGEAMVHKFLQEEANVSYCARTVTNTEYDDFYSTLAEGNTARAVGTAFDVASKDSLVKWVESSAERLGRIDVIIANASPMHMEGETEHWESSFAIDVMGFVELVKAATPYLEKSPQASIIVQSSFMGREFYRSPPAAYGPCKAAQLQHVQELSHFLGPKGIRVNAISPGPVLCKGGPWELYSKINPEWVEEQRLKIPLKRLGGPTEVANVAVFLASPLASFVSGTNMLVDGGIHVGTQF.

NADP(+) contacts are provided by Asp-69, Asn-96, and Lys-125. Catalysis depends on proton donor residues Ser-143 and Ser-144. Tyr-158, Lys-162, and Val-191 together coordinate NADP(+). The Proton acceptor role is filled by Tyr-158. The Lowers pKa of active site Tyr role is filled by Lys-162.

This sequence belongs to the short-chain dehydrogenases/reductases (SDR) family.

Its subcellular location is the cytoplasm. The protein resides in the cytosol. The catalysed reaction is isoepoxydon + NADP(+) = phyllostine + NADPH + H(+). It participates in mycotoxin biosynthesis; patulin biosynthesis. Its function is as follows. Isoepoxydon dehydrogenase; part of the gene cluster that mediates the biosynthesis of patulin, an acetate-derived tetraketide mycotoxin produced by several fungal species that shows antimicrobial properties against several bacteria. PatN catalyzes the conversion of isoepoxydon into phyllostine. The pathway begins with the synthesis of 6-methylsalicylic acid by the polyketide synthase (PKS) patK via condensation of acetate and malonate units. The 6-methylsalicylic acid decarboxylase patG then catalyzes the decarboxylation of 6-methylsalicylic acid to yield m-cresol (also known as 3-methylphenol). These first reactions occur in the cytosol. The intermediate m-cresol is then transported into the endoplasmic reticulum where the cytochrome P450 monooxygenase patH converts it to m-hydroxybenzyl alcohol, which is further converted to gentisyl alcohol by the cytochrome P450 monooxygenase patI. The oxidoreductases patJ and patO further convert gentisyl alcohol to isoepoxydon in the vacuole. PatN catalyzes then the transformation of isoepoxydon into phyllostine. The cluster protein patF is responsible for the conversion from phyllostine to neopatulin whereas the alcohol dehydrogenase patD converts neopatulin to E-ascladiol. The steps between isoepoxydon and E-ascladiol occur in the cytosol, and E-ascladiol is probably secreted to the extracellular space by one of the cluster-specific transporters patC or patM. Finally, the secreted patulin synthase patE catalyzes the conversion of E-ascladiol to patulin. The sequence is that of Isoepoxydon dehydrogenase patN from Penicillium expansum (Blue mold rot fungus).